A 32-amino-acid polypeptide reads, in one-letter code: Seminal plasma protein PDC-109 (32 aa).

Residues 1-32 (DQDEGVSTEPTQVGPAELHNDETCVGPLVYRN) form a disordered region. Threonine 11 carries O-linked (GalNAc...) threonine glycosylation. A Fibronectin type-II domain is found at 19-32 (HNDETCVGPLVYRN).

This sequence belongs to the seminal plasma protein family. As to quaternary structure, homodimer.

Its subcellular location is the secreted. Functionally, could enhance the fertilizing capacity of bull spermatozoa upon interaction with heparin-like glycosaminoglycans present in the female genital tract. Exhibits both simulatory and inhibitory actions on the release of pituitary gonadotropins. Binds to heparin and gelatin. This is Seminal plasma protein PDC-109 from Bos indicus (Zebu).